The sequence spans 526 residues: Peptide chain release factor 3 (526 aa).

One can recognise a tr-type G domain in the interval 8–277 (NKRRTFAIIS…GLTEWAPKPQ (270 aa)). GTP-binding positions include 17–24 (SHPDAGKT), 85–89 (DTPGH), and 139–142 (NKLD).

This sequence belongs to the TRAFAC class translation factor GTPase superfamily. Classic translation factor GTPase family. PrfC subfamily.

The protein localises to the cytoplasm. In terms of biological role, increases the formation of ribosomal termination complexes and stimulates activities of RF-1 and RF-2. It binds guanine nucleotides and has strong preference for UGA stop codons. It may interact directly with the ribosome. The stimulation of RF-1 and RF-2 is significantly reduced by GTP and GDP, but not by GMP. The chain is Peptide chain release factor 3 from Haemophilus ducreyi (strain 35000HP / ATCC 700724).